The chain runs to 294 residues: Formamidopyrimidine-DNA glycosylase (294 aa).

P2 acts as the Schiff-base intermediate with DNA in catalysis. Catalysis depends on E3, which acts as the Proton donor. K58 functions as the Proton donor; for beta-elimination activity in the catalytic mechanism. H105, R124, and K167 together coordinate DNA. The FPG-type zinc finger occupies 258–294 (QVYDREGEPCRTRGCKGTVKRFTQNGRSTFWCPSCQK). R284 acts as the Proton donor; for delta-elimination activity in catalysis.

It belongs to the FPG family. In terms of assembly, monomer. It depends on Zn(2+) as a cofactor.

The enzyme catalyses Hydrolysis of DNA containing ring-opened 7-methylguanine residues, releasing 2,6-diamino-4-hydroxy-5-(N-methyl)formamidopyrimidine.. It catalyses the reaction 2'-deoxyribonucleotide-(2'-deoxyribose 5'-phosphate)-2'-deoxyribonucleotide-DNA = a 3'-end 2'-deoxyribonucleotide-(2,3-dehydro-2,3-deoxyribose 5'-phosphate)-DNA + a 5'-end 5'-phospho-2'-deoxyribonucleoside-DNA + H(+). Involved in base excision repair of DNA damaged by oxidation or by mutagenic agents. Acts as a DNA glycosylase that recognizes and removes damaged bases. Has a preference for oxidized purines, such as 7,8-dihydro-8-oxoguanine (8-oxoG). Has AP (apurinic/apyrimidinic) lyase activity and introduces nicks in the DNA strand. Cleaves the DNA backbone by beta-delta elimination to generate a single-strand break at the site of the removed base with both 3'- and 5'-phosphates. This chain is Formamidopyrimidine-DNA glycosylase, found in Afipia carboxidovorans (strain ATCC 49405 / DSM 1227 / KCTC 32145 / OM5) (Oligotropha carboxidovorans).